The primary structure comprises 84 residues: Small ribosomal subunit protein eS27 (84 aa).

A C4-type zinc finger spans residues 38-60 (CPKCGATTTTFSHAHRQILCQKC).

Belongs to the eukaryotic ribosomal protein eS27 family. Component of the small ribosomal subunit. Zn(2+) serves as cofactor.

The protein localises to the cytoplasm. Its function is as follows. Component of the small ribosomal subunit. The ribosome is a large ribonucleoprotein complex responsible for the synthesis of proteins in the cell. Required for proper rRNA processing and maturation of 18S rRNAs. This is Small ribosomal subunit protein eS27 (RPS27) from Entamoeba histolytica (strain ATCC 30459 / HM-1:IMSS / ABRM).